The following is a 667-amino-acid chain: Probable export ATP-binding/permease protein MacB (667 aa).

The 239-residue stretch at 22–260 (LRLAGVSRRF…PVEEVQPAAE (239 aa)) folds into the ABC transporter domain. 58-65 (GASGSGKS) contributes to the ATP binding site. 4 helical membrane-spanning segments follow: residues 292-312 (LLTMLGIIIGITSVVSISAIG), 540-560 (LTLLLSLIAVISLVVGGIGVM), 601-621 (IGGVIGIGLSYGIGYLFALFV), and 630-650 (LGSIVTAFVCSTLIGIVFGFV).

The protein belongs to the ABC transporter superfamily. Macrolide exporter (TC 3.A.1.122) family. Probably part of a tripartite efflux system, which is composed of an inner membrane transporter, a periplasmic membrane fusion protein, and an outer membrane component.

The protein resides in the cell inner membrane. Its function is as follows. Probably part of a tripartite efflux system. In Pseudomonas entomophila (strain L48), this protein is Probable export ATP-binding/permease protein MacB.